A 92-amino-acid chain; its full sequence is Small ribosomal subunit protein uS17 (92 aa).

The protein belongs to the universal ribosomal protein uS17 family. As to quaternary structure, part of the 30S ribosomal subunit.

Functionally, one of the primary rRNA binding proteins, it binds specifically to the 5'-end of 16S ribosomal RNA. This chain is Small ribosomal subunit protein uS17, found in Cupriavidus pinatubonensis (strain JMP 134 / LMG 1197) (Cupriavidus necator (strain JMP 134)).